The primary structure comprises 89 residues: Small ribosomal subunit protein uS15 (89 aa).

The protein belongs to the universal ribosomal protein uS15 family. Part of the 30S ribosomal subunit. Forms a bridge to the 50S subunit in the 70S ribosome, contacting the 23S rRNA.

Its function is as follows. One of the primary rRNA binding proteins, it binds directly to 16S rRNA where it helps nucleate assembly of the platform of the 30S subunit by binding and bridging several RNA helices of the 16S rRNA. In terms of biological role, forms an intersubunit bridge (bridge B4) with the 23S rRNA of the 50S subunit in the ribosome. In Tolumonas auensis (strain DSM 9187 / NBRC 110442 / TA 4), this protein is Small ribosomal subunit protein uS15.